The sequence spans 335 residues: Glycerol-3-phosphate dehydrogenase [NAD(P)+] (335 aa).

NADPH contacts are provided by W12 and K106. 3 residues coordinate sn-glycerol 3-phosphate: K106, G136, and S138. A140 contacts NADPH. Sn-glycerol 3-phosphate contacts are provided by K191, D244, S254, R255, and N256. K191 serves as the catalytic Proton acceptor. R255 contributes to the NADPH binding site. The NADPH site is built by V279 and E281.

It belongs to the NAD-dependent glycerol-3-phosphate dehydrogenase family.

Its subcellular location is the cytoplasm. The enzyme catalyses sn-glycerol 3-phosphate + NAD(+) = dihydroxyacetone phosphate + NADH + H(+). The catalysed reaction is sn-glycerol 3-phosphate + NADP(+) = dihydroxyacetone phosphate + NADPH + H(+). The protein operates within membrane lipid metabolism; glycerophospholipid metabolism. Functionally, catalyzes the reduction of the glycolytic intermediate dihydroxyacetone phosphate (DHAP) to sn-glycerol 3-phosphate (G3P), the key precursor for phospholipid synthesis. The sequence is that of Glycerol-3-phosphate dehydrogenase [NAD(P)+] from Fusobacterium nucleatum subsp. nucleatum (strain ATCC 25586 / DSM 15643 / BCRC 10681 / CIP 101130 / JCM 8532 / KCTC 2640 / LMG 13131 / VPI 4355).